Reading from the N-terminus, the 130-residue chain is Small ribosomal subunit protein uS8 (130 aa).

The protein belongs to the universal ribosomal protein uS8 family. Part of the 30S ribosomal subunit. Contacts proteins S5 and S12.

Functionally, one of the primary rRNA binding proteins, it binds directly to 16S rRNA central domain where it helps coordinate assembly of the platform of the 30S subunit. The chain is Small ribosomal subunit protein uS8 from Moorella thermoacetica (strain ATCC 39073 / JCM 9320).